Reading from the N-terminus, the 193-residue chain is Ribosomal RNA large subunit methyltransferase E (193 aa).

Glycine 49, phenylalanine 51, aspartate 69, aspartate 86, and aspartate 106 together coordinate S-adenosyl-L-methionine. The Proton acceptor role is filled by lysine 146.

This sequence belongs to the class I-like SAM-binding methyltransferase superfamily. RNA methyltransferase RlmE family.

It localises to the cytoplasm. The catalysed reaction is uridine(2552) in 23S rRNA + S-adenosyl-L-methionine = 2'-O-methyluridine(2552) in 23S rRNA + S-adenosyl-L-homocysteine + H(+). Specifically methylates the uridine in position 2552 of 23S rRNA at the 2'-O position of the ribose in the fully assembled 50S ribosomal subunit. This Brachyspira hyodysenteriae (strain ATCC 49526 / WA1) protein is Ribosomal RNA large subunit methyltransferase E.